The chain runs to 260 residues: Global transcriptional regulator CodY (260 aa).

Residues 1–159 (MPNLLEKTRK…SSTVVGIQLL (159 aa)) are GAF domain. The H-T-H motif DNA-binding region spans 207-226 (ASVIADRIGITRSVIVNALR).

The protein belongs to the CodY family.

The protein localises to the cytoplasm. Its function is as follows. DNA-binding global transcriptional regulator which is involved in the adaptive response to starvation and acts by directly or indirectly controlling the expression of numerous genes in response to nutrient availability. During rapid exponential growth, CodY is highly active and represses genes whose products allow adaptation to nutrient depletion. The chain is Global transcriptional regulator CodY from Streptococcus pyogenes serotype M1.